A 347-amino-acid chain; its full sequence is Phosphoribosylformylglycinamidine cyclo-ligase (347 aa).

Belongs to the AIR synthase family.

It localises to the cytoplasm. It catalyses the reaction 2-formamido-N(1)-(5-O-phospho-beta-D-ribosyl)acetamidine + ATP = 5-amino-1-(5-phospho-beta-D-ribosyl)imidazole + ADP + phosphate + H(+). It functions in the pathway purine metabolism; IMP biosynthesis via de novo pathway; 5-amino-1-(5-phospho-D-ribosyl)imidazole from N(2)-formyl-N(1)-(5-phospho-D-ribosyl)glycinamide: step 2/2. This is Phosphoribosylformylglycinamidine cyclo-ligase from Alkaliphilus metalliredigens (strain QYMF).